A 393-amino-acid chain; its full sequence is Formate-dependent phosphoribosylglycinamide formyltransferase (393 aa).

Residues 20-21 (EL) and glutamate 80 contribute to the N(1)-(5-phospho-beta-D-ribosyl)glycinamide site. Residues arginine 112, lysine 153, 158–163 (SSGKGQ), 193–196 (EAFI), and glutamate 201 contribute to the ATP site. The ATP-grasp domain maps to 117 to 306 (RLAAEDLNLP…EFELHVRAVL (190 aa)). The Mg(2+) site is built by glutamate 265 and glutamate 277. N(1)-(5-phospho-beta-D-ribosyl)glycinamide-binding positions include aspartate 284, lysine 354, and 361 to 362 (RR).

The protein belongs to the PurK/PurT family. In terms of assembly, homodimer.

It carries out the reaction N(1)-(5-phospho-beta-D-ribosyl)glycinamide + formate + ATP = N(2)-formyl-N(1)-(5-phospho-beta-D-ribosyl)glycinamide + ADP + phosphate + H(+). It functions in the pathway purine metabolism; IMP biosynthesis via de novo pathway; N(2)-formyl-N(1)-(5-phospho-D-ribosyl)glycinamide from N(1)-(5-phospho-D-ribosyl)glycinamide (formate route): step 1/1. Its function is as follows. Involved in the de novo purine biosynthesis. Catalyzes the transfer of formate to 5-phospho-ribosyl-glycinamide (GAR), producing 5-phospho-ribosyl-N-formylglycinamide (FGAR). Formate is provided by PurU via hydrolysis of 10-formyl-tetrahydrofolate. This is Formate-dependent phosphoribosylglycinamide formyltransferase from Syntrophotalea carbinolica (strain DSM 2380 / NBRC 103641 / GraBd1) (Pelobacter carbinolicus).